Reading from the N-terminus, the 20-residue chain is Hemocyanin subunit Ib (20 aa).

Residues 1-20 (DSVGSTTAHKQQNINHLLDK) are disordered.

Belongs to the tyrosinase family. Hemocyanin subfamily. As to quaternary structure, composed of 3 major subunits (IB, II and III) and 1 minor subunit (IA) which form homohexamers and heterohexamers. May also form larger structures. Hemolymph.

It is found in the secreted. The protein resides in the extracellular space. Its function is as follows. Hemocyanins are copper-containing oxygen carriers occurring freely dissolved in the hemolymph of many mollusks and arthropods. In Panulirus japonicus (Japanese spiny lobster), this protein is Hemocyanin subunit Ib.